The chain runs to 80 residues: MSNVKRGGKFRRARKKVCIFCVDKAESIDYKDVAKLKKYITERGKILPRRISGTCAKHQRQLTDAIKRSRNIALLPFTTE.

Belongs to the bacterial ribosomal protein bS18 family. In terms of assembly, part of the 30S ribosomal subunit. Forms a tight heterodimer with protein bS6.

Functionally, binds as a heterodimer with protein bS6 to the central domain of the 16S rRNA, where it helps stabilize the platform of the 30S subunit. The sequence is that of Small ribosomal subunit protein bS18 from Clostridium perfringens (strain ATCC 13124 / DSM 756 / JCM 1290 / NCIMB 6125 / NCTC 8237 / Type A).